A 156-amino-acid chain; its full sequence is ATP synthase subunit b (156 aa).

The chain crosses the membrane as a helical span at residues 7-27 (LIGQTIAFIVFVWFCMKFVWP).

It belongs to the ATPase B chain family. F-type ATPases have 2 components, F(1) - the catalytic core - and F(0) - the membrane proton channel. F(1) has five subunits: alpha(3), beta(3), gamma(1), delta(1), epsilon(1). F(0) has three main subunits: a(1), b(2) and c(10-14). The alpha and beta chains form an alternating ring which encloses part of the gamma chain. F(1) is attached to F(0) by a central stalk formed by the gamma and epsilon chains, while a peripheral stalk is formed by the delta and b chains.

The protein localises to the cell inner membrane. F(1)F(0) ATP synthase produces ATP from ADP in the presence of a proton or sodium gradient. F-type ATPases consist of two structural domains, F(1) containing the extramembraneous catalytic core and F(0) containing the membrane proton channel, linked together by a central stalk and a peripheral stalk. During catalysis, ATP synthesis in the catalytic domain of F(1) is coupled via a rotary mechanism of the central stalk subunits to proton translocation. In terms of biological role, component of the F(0) channel, it forms part of the peripheral stalk, linking F(1) to F(0). This chain is ATP synthase subunit b, found in Idiomarina loihiensis (strain ATCC BAA-735 / DSM 15497 / L2-TR).